Here is a 352-residue protein sequence, read N- to C-terminus: MFRYLSKRQWILLLLGILFVVAGYFILPVSVPLIIALITALFLNPAVRWMQFRFRLNRKMAVTIVFLLFVIMIGLLGTYAVTRAVTQLVELADNAPSYINQINNVLINWQNNMNSFTQNMPSEFVDKVSVELQNTIDTTTQTLSQKLQLSNIAAFAAKIPEYLISFLVYLIALFLFMLELPRLKDKMHGNFTESTSEKVKFMNARLSYVVFGFLKAQFLVSIVIFVVCLIGLFWITPEVAIVMSLIIWIVDFVPIIGSIVILGPWALYMLIVGDIAMGGQLAMLAIILLAIRRTVEPKVMGRHIGLSPLATLIAMYIGLQLIGLMGFILGPLLVIAFNSAKEAGIIRWNFKL.

8 helical membrane passes run 11 to 31 (ILLL…PVSV), 32 to 52 (PLII…WMQF), 61 to 81 (AVTI…TYAV), 159 to 179 (IPEY…FMLE), 216 to 236 (AQFL…FWIT), 241 to 261 (IVMS…SIVI), 271 to 291 (IVGD…LLAI), and 317 to 337 (IGLQ…VIAF).

Belongs to the autoinducer-2 exporter (AI-2E) (TC 2.A.86) family.

It localises to the cell membrane. Functionally, catalyzes the pH-dependent efflux of sodium and lithium in exchange for external protons. The sequence is that of Sodium-lithium/proton antiporter from Halobacillus andaensis.